Reading from the N-terminus, the 99-residue chain is Malonate decarboxylase acyl carrier protein (99 aa).

The residue at position 25 (Ser25) is an O-(phosphoribosyl dephospho-coenzyme A)serine.

This sequence belongs to the MdcC family. Post-translationally, covalently binds the prosthetic group of malonate decarboxylase.

It localises to the cytoplasm. Subunit of malonate decarboxylase, it is an acyl carrier protein to which acetyl and malonyl thioester residues are bound via a 2'-(5''-phosphoribosyl)-3'-dephospho-CoA prosthetic group and turn over during the catalytic mechanism. The chain is Malonate decarboxylase acyl carrier protein from Pseudomonas putida (strain GB-1).